A 295-amino-acid chain; its full sequence is Glutamyl-Q tRNA(Asp) synthetase (295 aa).

L-glutamate contacts are provided by residues 5 to 9 and E41; that span reads RFAPS. Residues 8–18 carry the 'HIGH' region motif; the sequence is PSPTGLLHIGS. C97, C99, Y117, and C121 together coordinate Zn(2+). Positions 178 and 196 each coordinate L-glutamate. Residues 234–238 carry the 'KMSKS' region motif; that stretch reads KWSKQ. K237 contributes to the ATP binding site.

Belongs to the class-I aminoacyl-tRNA synthetase family. GluQ subfamily. Zn(2+) serves as cofactor.

Its function is as follows. Catalyzes the tRNA-independent activation of glutamate in presence of ATP and the subsequent transfer of glutamate onto a tRNA(Asp). Glutamate is transferred on the 2-amino-5-(4,5-dihydroxy-2-cyclopenten-1-yl) moiety of the queuosine in the wobble position of the QUC anticodon. This Neisseria meningitidis serogroup C (strain 053442) protein is Glutamyl-Q tRNA(Asp) synthetase.